Reading from the N-terminus, the 32-residue chain is Photosystem II reaction center protein T (32 aa).

A helical membrane pass occupies residues 3 to 23 (ALVYTFLLIGTLMVIFFAVFF).

Belongs to the PsbT family. PSII is composed of 1 copy each of membrane proteins PsbA, PsbB, PsbC, PsbD, PsbE, PsbF, PsbH, PsbI, PsbJ, PsbK, PsbL, PsbM, PsbT, PsbX, PsbY, PsbZ, Psb30/Ycf12, at least 3 peripheral proteins of the oxygen-evolving complex and a large number of cofactors. It forms dimeric complexes.

Its subcellular location is the plastid. It is found in the chloroplast thylakoid membrane. In terms of biological role, found at the monomer-monomer interface of the photosystem II (PS II) dimer, plays a role in assembly and dimerization of PSII. PSII is a light-driven water plastoquinone oxidoreductase, using light energy to abstract electrons from H(2)O, generating a proton gradient subsequently used for ATP formation. This is Photosystem II reaction center protein T from Thalassiosira pseudonana (Marine diatom).